Here is a 273-residue protein sequence, read N- to C-terminus: Shikimate dehydrogenase (NADP(+)) (273 aa).

Shikimate-binding positions include 15–17 (SKS) and Thr-62. The active-site Proton acceptor is the Lys-66. Asp-78 serves as a coordination point for NADP(+). 2 residues coordinate shikimate: Asn-87 and Asp-103. Residues 127 to 131 (GAGGA), 150 to 155 (NRTHTR), Ala-218, and Gly-238 contribute to the NADP(+) site.

Belongs to the shikimate dehydrogenase family. In terms of assembly, homodimer.

The catalysed reaction is shikimate + NADP(+) = 3-dehydroshikimate + NADPH + H(+). The protein operates within metabolic intermediate biosynthesis; chorismate biosynthesis; chorismate from D-erythrose 4-phosphate and phosphoenolpyruvate: step 4/7. Involved in the biosynthesis of the chorismate, which leads to the biosynthesis of aromatic amino acids. Catalyzes the reversible NADPH linked reduction of 3-dehydroshikimate (DHSA) to yield shikimate (SA). The polypeptide is Shikimate dehydrogenase (NADP(+)) (Yersinia pseudotuberculosis serotype O:1b (strain IP 31758)).